The sequence spans 417 residues: Serine--tRNA ligase (417 aa).

232–234 is an L-serine binding site; that stretch reads TSE. An ATP-binding site is contributed by 263–265; sequence RKE. Position 286 (Glu-286) interacts with L-serine. 350–353 lines the ATP pocket; it reads EISS. Ser-385 contributes to the L-serine binding site.

The protein belongs to the class-II aminoacyl-tRNA synthetase family. Type-1 seryl-tRNA synthetase subfamily. As to quaternary structure, homodimer. The tRNA molecule binds across the dimer.

Its subcellular location is the cytoplasm. It catalyses the reaction tRNA(Ser) + L-serine + ATP = L-seryl-tRNA(Ser) + AMP + diphosphate + H(+). The catalysed reaction is tRNA(Sec) + L-serine + ATP = L-seryl-tRNA(Sec) + AMP + diphosphate + H(+). It functions in the pathway aminoacyl-tRNA biosynthesis; selenocysteinyl-tRNA(Sec) biosynthesis; L-seryl-tRNA(Sec) from L-serine and tRNA(Sec): step 1/1. Catalyzes the attachment of serine to tRNA(Ser). Is also able to aminoacylate tRNA(Sec) with serine, to form the misacylated tRNA L-seryl-tRNA(Sec), which will be further converted into selenocysteinyl-tRNA(Sec). The protein is Serine--tRNA ligase of Campylobacter hominis (strain ATCC BAA-381 / DSM 21671 / CCUG 45161 / LMG 19568 / NCTC 13146 / CH001A).